The primary structure comprises 262 residues: Tryptophan synthase alpha chain (262 aa).

Active-site proton acceptor residues include glutamate 49 and aspartate 60.

It belongs to the TrpA family. In terms of assembly, tetramer of two alpha and two beta chains.

The enzyme catalyses (1S,2R)-1-C-(indol-3-yl)glycerol 3-phosphate + L-serine = D-glyceraldehyde 3-phosphate + L-tryptophan + H2O. Its pathway is amino-acid biosynthesis; L-tryptophan biosynthesis; L-tryptophan from chorismate: step 5/5. The alpha subunit is responsible for the aldol cleavage of indoleglycerol phosphate to indole and glyceraldehyde 3-phosphate. In Aquifex aeolicus (strain VF5), this protein is Tryptophan synthase alpha chain.